A 94-amino-acid chain; its full sequence is DNA-directed RNA polymerase subunit Rpo11 (94 aa).

Belongs to the archaeal Rpo11/eukaryotic RPB11/RPC19 RNA polymerase subunit family. In terms of assembly, part of the RNA polymerase complex.

Its subcellular location is the cytoplasm. The catalysed reaction is RNA(n) + a ribonucleoside 5'-triphosphate = RNA(n+1) + diphosphate. DNA-dependent RNA polymerase (RNAP) catalyzes the transcription of DNA into RNA using the four ribonucleoside triphosphates as substrates. The chain is DNA-directed RNA polymerase subunit Rpo11 from Thermococcus kodakarensis (strain ATCC BAA-918 / JCM 12380 / KOD1) (Pyrococcus kodakaraensis (strain KOD1)).